A 411-amino-acid polypeptide reads, in one-letter code: Adenylosuccinate synthetase (411 aa).

GTP contacts are provided by residues 11 to 17 and 39 to 41; these read GDEGKGK and GHT. D12 (proton acceptor) is an active-site residue. Mg(2+)-binding residues include D12 and G39. Residues 12–15, 37–40, T121, R135, Q215, T230, and R294 contribute to the IMP site; these read DEGK and NAGH. The active-site Proton donor is H40. Residue 290–296 participates in substrate binding; sequence TTTKRPR. GTP contacts are provided by residues R296, 322–324, and 400–402; these read KLD and STS.

It belongs to the adenylosuccinate synthetase family. As to quaternary structure, homodimer. It depends on Mg(2+) as a cofactor.

The protein localises to the cytoplasm. It carries out the reaction IMP + L-aspartate + GTP = N(6)-(1,2-dicarboxyethyl)-AMP + GDP + phosphate + 2 H(+). It functions in the pathway purine metabolism; AMP biosynthesis via de novo pathway; AMP from IMP: step 1/2. Plays an important role in the de novo pathway of purine nucleotide biosynthesis. Catalyzes the first committed step in the biosynthesis of AMP from IMP. This is Adenylosuccinate synthetase from Helicobacter acinonychis (strain Sheeba).